The primary structure comprises 492 residues: Prenylcysteine oxidase 1-like (492 aa).

Positions 1–21 are cleaved as a signal peptide; sequence MAHAARLLAALAALLAAAATG. A glycan (N-linked (GlcNAc...) asparagine) is linked at Asn-340.

It belongs to the prenylcysteine oxidase family. The cofactor is FAD.

The protein resides in the secreted. Functionally, likely to have oxidoreductase activity. Required in the mevalonate pathway to regulate prenylation and enhances the bactericidal activity of neutrophils. The sequence is that of Prenylcysteine oxidase 1-like (PCYOX1L) from Bos taurus (Bovine).